The following is a 524-amino-acid chain: Peptide chain release factor 3 (524 aa).

Positions 9 to 275 (SRRRTFAIIS…AVVDLSPPPI (267 aa)) constitute a tr-type G domain. GTP-binding positions include 18–25 (SHPDAGKT), 86–90 (DTPGH), and 140–143 (NKLD).

This sequence belongs to the TRAFAC class translation factor GTPase superfamily. Classic translation factor GTPase family. PrfC subfamily.

Its subcellular location is the cytoplasm. Functionally, increases the formation of ribosomal termination complexes and stimulates activities of RF-1 and RF-2. It binds guanine nucleotides and has strong preference for UGA stop codons. It may interact directly with the ribosome. The stimulation of RF-1 and RF-2 is significantly reduced by GTP and GDP, but not by GMP. The sequence is that of Peptide chain release factor 3 from Dechloromonas aromatica (strain RCB).